We begin with the raw amino-acid sequence, 421 residues long: CinA-like protein (421 aa).

It belongs to the CinA family.

The protein is CinA-like protein of Synechococcus elongatus (strain ATCC 33912 / PCC 7942 / FACHB-805) (Anacystis nidulans R2).